A 372-amino-acid chain; its full sequence is Protein phosphatase 1 regulatory subunit 42 (372 aa).

7 LRR repeats span residues 30 to 51, 52 to 71, 72 to 93, 94 to 115, 116 to 137, 146 to 167, and 168 to 189; these read RITHLNFSNKNIDEVEDLTMCR, NLTVLYLYDNNINQIKNLGS, NLTHLYLQNNCISCIENLSGLK, RLEKLYLGGNCLTVVEGLEGLR, ELRELHIENQRLPPGEKLLFDP, SLSVLNISNNNIDELKDLAVLE, and NLTQFVAADNQLKEIKDLEFVL. Positions 203-241 constitute an LRRCT domain; it reads NPVCLKPKYREKVTIISKTLEILDGKEIKEMARQFLLNW.

It localises to the cytoplasm. The protein localises to the cytoskeleton. The protein resides in the microtubule organizing center. Its subcellular location is the centrosome. In terms of biological role, may regulate phosphatase activity of protein phosphatase 1 (PP1) complexes. In Xenopus laevis (African clawed frog), this protein is Protein phosphatase 1 regulatory subunit 42 (ppp1r42).